Reading from the N-terminus, the 188-residue chain is Acireductone dioxygenase (188 aa).

His-97, His-99, Glu-103, and His-141 together coordinate Fe(2+). Ni(2+) is bound by residues His-97, His-99, Glu-103, and His-141.

It belongs to the acireductone dioxygenase (ARD) family. Monomer. The cofactor is Fe(2+). Ni(2+) serves as cofactor.

It catalyses the reaction 1,2-dihydroxy-5-(methylsulfanyl)pent-1-en-3-one + O2 = 3-(methylsulfanyl)propanoate + CO + formate + 2 H(+). The catalysed reaction is 1,2-dihydroxy-5-(methylsulfanyl)pent-1-en-3-one + O2 = 4-methylsulfanyl-2-oxobutanoate + formate + 2 H(+). The protein operates within amino-acid biosynthesis; L-methionine biosynthesis via salvage pathway; L-methionine from S-methyl-5-thio-alpha-D-ribose 1-phosphate: step 5/6. Its function is as follows. Catalyzes 2 different reactions between oxygen and the acireductone 1,2-dihydroxy-3-keto-5-methylthiopentene (DHK-MTPene) depending upon the metal bound in the active site. Fe-containing acireductone dioxygenase (Fe-ARD) produces formate and 2-keto-4-methylthiobutyrate (KMTB), the alpha-ketoacid precursor of methionine in the methionine recycle pathway. Ni-containing acireductone dioxygenase (Ni-ARD) produces methylthiopropionate, carbon monoxide and formate, and does not lie on the methionine recycle pathway. In Xylella fastidiosa (strain M12), this protein is Acireductone dioxygenase.